The sequence spans 291 residues: Formamidopyrimidine-DNA glycosylase (291 aa).

Residue P2 is the Schiff-base intermediate with DNA of the active site. E3 acts as the Proton donor in catalysis. K58 functions as the Proton donor; for beta-elimination activity in the catalytic mechanism. DNA contacts are provided by H104, R123, and K166. The FPG-type zinc finger occupies 257–291 (KVYDREGEPCPTCGGTVQRFVQNGRSTFWCPKCQK). R281 functions as the Proton donor; for delta-elimination activity in the catalytic mechanism.

It belongs to the FPG family. As to quaternary structure, monomer. Zn(2+) serves as cofactor.

The enzyme catalyses Hydrolysis of DNA containing ring-opened 7-methylguanine residues, releasing 2,6-diamino-4-hydroxy-5-(N-methyl)formamidopyrimidine.. It catalyses the reaction 2'-deoxyribonucleotide-(2'-deoxyribose 5'-phosphate)-2'-deoxyribonucleotide-DNA = a 3'-end 2'-deoxyribonucleotide-(2,3-dehydro-2,3-deoxyribose 5'-phosphate)-DNA + a 5'-end 5'-phospho-2'-deoxyribonucleoside-DNA + H(+). Its function is as follows. Involved in base excision repair of DNA damaged by oxidation or by mutagenic agents. Acts as a DNA glycosylase that recognizes and removes damaged bases. Has a preference for oxidized purines, such as 7,8-dihydro-8-oxoguanine (8-oxoG). Has AP (apurinic/apyrimidinic) lyase activity and introduces nicks in the DNA strand. Cleaves the DNA backbone by beta-delta elimination to generate a single-strand break at the site of the removed base with both 3'- and 5'-phosphates. The sequence is that of Formamidopyrimidine-DNA glycosylase from Rhodopseudomonas palustris (strain ATCC BAA-98 / CGA009).